The following is a 932-amino-acid chain: MCESYSRSLLRVSVAQICQALGWDSVQLSACHLLTDVLQRYLQQLGRGCHRYSELYGRTDPILDDVGEAFQLMGVNLHELEDYIHNIEPVTFPHQIPSFPVSKNNVLQFPQPGSKDAEERKDYIPDYLPPIVSSQEEEEEEQVPTDGGTSAEAMQVPLEEDDEMEEEEVINDENFLGKRPLDSPEVEEMPSMKRPRLLSTKGDSLDVVLLEAREPLSSINPQKTPPVLSPVRVQDRADLAPPSPQPPMLAPFAKSQLPIAKPLETKSFTPKTKTKASSPGQKTKSPKAALSPARLGSPIRSPKTIPKEKKSPGRSKSPKSPKSPKIVAHVPQTPVRPETPNRTPSAMVVEKTVKETIPVMKPTQTPPEVVKLNIEMQPKKPVVTDKTIDDSIDAVIARACAEREPDPFEFSSGSESEGDTFTSPKRISGSECATPKASTSSNNFTKSLATPLPLSSGTSSSDNSWTMDASIDEVVRKAKLGAPSNMPPTFPYISSPSISPPTPEPLHKGYEEKAKLPSSVDVKKKLKKELKTKLKKKEKQRDRERERERNKERSKEKDKMREREKEKEAGKELKYPWRELMKDEDSDPYKFKIKEFEDIDAAKVRLKDGIVRREREKHKDKKKDRERSKREKDKRERERLKEKNREDKIKAPPTQLVLPPKEMALPLFSPSAVRVPAMLPAFSPMLPEKLFEEKEKPKEKERKKDKKEKKKKKEKEKEKEKKEREREKERREREKREKEKEKHKHEKIKVEPVIPAPSPVIPRLTLRVGAGQDKIVISKVVPAPEAKPAPSLNRPKTPPPAPVPIPVRVSPTPLQPPLLTQAAVCPALMPSPAPALSGIGSAKAPVRSVVTETVSTYVIRDEWGNQIWICPGCNKPDDGSPMIGCDDCDDWYHWPCVGIMAAPPEEMQWFCPKCANKIKKDKKHKKRKHRAH.

Disordered regions lie at residues 130 to 201 (PIVS…LSTK), 213 to 347 (REPL…PSAM), 403 to 465 (REPD…DNSW), and 480 to 579 (LGAP…PWRE). Positions 158 to 171 (LEEDDEMEEEEVIN) are enriched in acidic residues. Residues S183, S199, S229, and S243 each carry the phosphoserine modification. K266 carries the post-translational modification N6-acetyllysine. The span at 266–283 (KSFTPKTKTKASSPGQKT) shows a compositional bias: polar residues. 3 positions are modified to phosphoserine: S291, S297, and S301. The span at 408-423 (FEFSSGSESEGDTFTS) shows a compositional bias: low complexity. A compositionally biased stretch (polar residues) spans 436 to 446 (KASTSSNNFTK). Over residues 447–461 (SLATPLPLSSGTSSS) the composition is skewed to low complexity. Position 502 is a phosphothreonine (T502). A compositionally biased stretch (basic and acidic residues) spans 505 to 515 (PLHKGYEEKAK). Residues 524-538 (KKLKKELKTKLKKKE) show a composition bias toward basic residues. Positions 539-579 (KQRDRERERERNKERSKEKDKMREREKEKEAGKELKYPWRE) are enriched in basic and acidic residues. Residue K582 forms a Glycyl lysine isopeptide (Lys-Gly) (interchain with G-Cter in SUMO2) linkage. The segment at 607–657 (KDGIVRREREKHKDKKKDRERSKREKDKRERERLKEKNREDKIKAPPTQLV) is disordered. A compositionally biased stretch (basic and acidic residues) spans 623–650 (KDRERSKREKDKRERERLKEKNREDKIK). S669 carries the phosphoserine modification. The disordered stretch occupies residues 681 to 746 (AFSPMLPEKL…EKEKEKHKHE (66 aa)). Positions 689-702 (KLFEEKEKPKEKER) are enriched in basic and acidic residues. Residues 703–714 (KKDKKEKKKKKE) are compositionally biased toward basic residues. A compositionally biased stretch (basic and acidic residues) spans 715–740 (KEKEKEKKEREREKERREREKREKEK). K749 participates in a covalent cross-link: Glycyl lysine isopeptide (Lys-Gly) (interchain with G-Cter in SUMO2). At S758 the chain carries Phosphoserine. K779 bears the N6-acetyllysine mark. The segment at 867–917 (IWICPGCNKPDDGSPMIGCDDCDDWYHWPCVGIMAAPPEEMQWFCPKCANK) adopts a PHD-type zinc-finger fold.

It belongs to the TAF3 family. In terms of assembly, component of the TFIID basal transcription factor complex, composed of TATA-box-binding protein TBP, and a number of TBP-associated factors (TAFs), including TAF1, TAF2, TAF3, TAF4, TAF5, TAF6, TAF7, TAF8, TAF9, TAF10, TAF11, TAF12 and TAF13. Interacts with TAF10 via histone fold. Interacts with TAF13, TBP, SAP130 and GCN5L2. Interacts with TBPL2.

It is found in the nucleus. Functionally, the TFIID basal transcription factor complex plays a major role in the initiation of RNA polymerase II (Pol II)-dependent transcription. TFIID recognizes and binds promoters with or without a TATA box via its subunit TBP, a TATA-box-binding protein, and promotes assembly of the pre-initiation complex (PIC). The TFIID complex consists of TBP and TBP-associated factors (TAFs), including TAF1, TAF2, TAF3, TAF4, TAF5, TAF6, TAF7, TAF8, TAF9, TAF10, TAF11, TAF12 and TAF13. The TFIID complex structure can be divided into 3 modules TFIID-A, TFIID-B, and TFIID-C. TAF3 forms the TFIID-A module together with TAF5 and TBP. Required in complex with TBPL2 for the differentiation of myoblasts into myocytes. The TAF3-TBPL2 complex replaces TFIID at specific promoters at an early stage in the differentiation process. This is Transcription initiation factor TFIID subunit 3 (Taf3) from Mus musculus (Mouse).